A 752-amino-acid polypeptide reads, in one-letter code: Glutamate carboxypeptidase 2 (752 aa).

Residues 1-19 (MWNAQQDSDSAEALGRRQR) are Cytoplasmic-facing. Ser-10 bears the Phosphoserine mark. A helical; Signal-anchor for type II membrane protein transmembrane segment spans residues 20–44 (WFCAGTLVLAFTGTFIIGFLFGWFI). The Extracellular portion of the chain corresponds to 45 to 752 (KPSNDSTSSV…AAAETLREVD (708 aa)). Residues Asn-48, Asn-78, Asn-123, Asn-155, and Asn-197 are each glycosylated (N-linked (GlcNAc...) asparagine). Arg-212 and Asn-259 together coordinate substrate. Residues Thr-271 and Tyr-274 each coordinate Ca(2+). The interval 276–589 (ANEYAYRHEF…QVRGAMVFEL (314 aa)) is NAALADase. N-linked (GlcNAc...) asparagine glycosylation is present at Asn-338. Residues His-379 and Asp-389 each coordinate Zn(2+). A substrate-binding site is contributed by Glu-426. Glu-426 acts as the Nucleophile; for NAALADase activity in catalysis. Glu-427 contacts Zn(2+). Glu-435 and Glu-438 together coordinate Ca(2+). Zn(2+) is bound at residue Asp-455. N-linked (GlcNAc...) asparagine glycans are attached at residues Asn-461 and Asn-478. Residues 519–520 (SG), Asn-521, 536–538 (RAR), Tyr-554, and 554–555 (YH) each bind substrate. His-555 contacts Zn(2+). Asn-615 carries N-linked (GlcNAc...) asparagine glycosylation. Residue Ser-630 is the Charge relay system of the active site. A glycan (N-linked (GlcNAc...) asparagine) is linked at Asn-640. Residues Asp-668 and His-691 each act as charge relay system in the active site. Residue 701 to 702 (KY) coordinates substrate.

The protein belongs to the peptidase M28 family. M28B subfamily. Homodimer. Zn(2+) serves as cofactor. As to expression, widely expressed throughout brain regions with highest levels in the hippocampus, dentate gyrus, priform cortex, choroid plexus of ventricles, pineal gland, anterior lobe of the pituitary gland and supraoptic nucleus. High levels also found in the cerebral cortex, substantia nigra, pontine nucleus and the granule cell layer of cerebellum. Highly expressed in astrocytes and non-myelinating Schwann cells. Also expressed in kidney, localizing to the proximal brush border of the renal tube.

Its subcellular location is the cell membrane. The catalysed reaction is Release of an unsubstituted, C-terminal glutamyl residue, typically from Ac-Asp-Glu or folylpoly-gamma-glutamates.. Its activity is regulated as follows. The NAALADase activity is inhibited by beta-NAAG, quisqualic acid and 2-(phosphonomethyl)glutaric acid (PMG). Functionally, has both folate hydrolase and N-acetylated-alpha-linked-acidic dipeptidase (NAALADase) activity. Has a preference for tri-alpha-glutamate peptides. In the intestine, required for the uptake of folate. In the brain, modulates excitatory neurotransmission through the hydrolysis of the neuropeptide, N-aceylaspartylglutamate (NAAG), thereby releasing glutamate. Also exhibits a dipeptidyl-peptidase IV type activity. In vitro, cleaves Gly-Pro-AMC. The chain is Glutamate carboxypeptidase 2 (Folh1) from Rattus norvegicus (Rat).